A 430-amino-acid chain; its full sequence is Forkhead box protein N2 (430 aa).

Residues 1-47 (MGPATGMTPDKNIESPTAEKVPGLSQTENMGSLPEEVGAARPKASMV) form a disordered region. Residues 108 to 204 (KPPYSFSLLI…QALKKQPFSS (97 aa)) constitute a DNA-binding region (fork-head). 2 disordered regions span residues 299–326 (NIDP…SVSS) and 338–391 (PKNS…EASQ). The span at 355-366 (DDTDIDYEEDTL) shows a compositional bias: acidic residues. Residues 381–390 (HGSKLRKEAS) are compositionally biased toward basic and acidic residues.

In terms of tissue distribution, expressed in the developing eye from stage 23. Localized to the prospective retinal layer and a layer of cells lateral to the ventricular zone. At stage 29, expression extends to the branchial arches and the brain. At stage 33/34, expressed in the vagal ganglion. At stage 36, expression in the retina decreases. Not expressed in the eye lens.

The protein resides in the nucleus. This is Forkhead box protein N2 from Xenopus laevis (African clawed frog).